A 349-amino-acid chain; its full sequence is Guanine nucleotide-binding protein-like alpha-10 subunit (349 aa).

Residues 33-349 form the G-alpha domain; sequence EEIRVLIYGQ…LNITYNSVKN (317 aa). The tract at residues 36–49 is G1 motif; it reads RVLIYGQKKVGVTT. The interval 168 to 176 is G2 motif; sequence DLNFIKLTQ. Positions 191–200 are G3 motif; it reads IKMIEMGIQT. GTP contacts are provided by residues 195 to 199 and 266 to 269; these read EMGIQ and NKKD. Residues 262–269 form a G4 motif region; sequence IVFFNKKD. Residues 320–325 form a G5 motif region; that stretch reads NEESEV.

It belongs to the G-alpha family.

This Dictyostelium discoideum (Social amoeba) protein is Guanine nucleotide-binding protein-like alpha-10 subunit (gpaJ).